A 330-amino-acid chain; its full sequence is 4-hydroxythreonine-4-phosphate dehydrogenase (330 aa).

Residue Thr-133 coordinates substrate. Residues His-161, His-206, and His-261 each coordinate a divalent metal cation. Substrate contacts are provided by Lys-269, Asn-278, and Arg-287.

Belongs to the PdxA family. In terms of assembly, homodimer. Zn(2+) serves as cofactor. Mg(2+) is required as a cofactor. Requires Co(2+) as cofactor.

The protein resides in the cytoplasm. The enzyme catalyses 4-(phosphooxy)-L-threonine + NAD(+) = 3-amino-2-oxopropyl phosphate + CO2 + NADH. It participates in cofactor biosynthesis; pyridoxine 5'-phosphate biosynthesis; pyridoxine 5'-phosphate from D-erythrose 4-phosphate: step 4/5. Its function is as follows. Catalyzes the NAD(P)-dependent oxidation of 4-(phosphooxy)-L-threonine (HTP) into 2-amino-3-oxo-4-(phosphooxy)butyric acid which spontaneously decarboxylates to form 3-amino-2-oxopropyl phosphate (AHAP). This Xylella fastidiosa (strain Temecula1 / ATCC 700964) protein is 4-hydroxythreonine-4-phosphate dehydrogenase.